The chain runs to 331 residues: B-box zinc finger protein 21 (331 aa).

8 residues coordinate Zn(2+): cysteine 5, cysteine 8, cysteine 28, histidine 34, cysteine 60, cysteine 63, cysteine 83, and histidine 93. The B box-type 1; atypical zinc-finger motif lies at 5-47 (CDVCDKEEASVFCTADEASLCGGCDHQVHHANKLASKHLRFSL). The B box-type 2; atypical zinc-finger motif lies at 60-102 (CDICQDKKALLFCQQDRAILCKDCDSSIHAANEHTKKHDRFLL). 2 stretches are compositionally biased toward low complexity: residues 115 to 126 (KPTSKSSSSSSS) and 228 to 238 (NNNNNNNNNNN). Disordered regions lie at residues 115 to 167 (KPTS…GGDA) and 209 to 241 (DDDG…NTVS).

As to quaternary structure, interacts with COP1, HY5 and BBX32. Interacts with FLZ1.

It is found in the nucleus. Transcription activator that acts as a positive regulator of seedling photomorphogenesis. Acts downstream of COP1 and play an important role in early and long-term adjustment of the shade avoidance syndrome (SAS) responses in natural environments. The polypeptide is B-box zinc finger protein 21 (Arabidopsis thaliana (Mouse-ear cress)).